The sequence spans 444 residues: Tubulin beta 8B (444 aa).

The short motif at 1 to 4 (MREI) is the MREI motif element. 6 residues coordinate GTP: glutamine 11, glutamate 69, serine 138, glycine 142, threonine 143, and glycine 144. Residue glutamate 69 participates in Mg(2+) binding. Serine 172 bears the Phosphoserine; by CDK1 mark. The GTP site is built by asparagine 204 and asparagine 226. The tract at residues 421-444 (EYQQYQDATAEEEEDEEYAEEEVA) is disordered. Residues 429–444 (TAEEEEDEEYAEEEVA) show a composition bias toward acidic residues. The residue at position 436 (glutamate 436) is a 5-glutamyl polyglutamate.

It belongs to the tubulin family. In terms of assembly, dimer of alpha and beta chains. A typical microtubule is a hollow water-filled tube with an outer diameter of 25 nm and an inner diameter of 15 nM. Alpha-beta heterodimers associate head-to-tail to form protofilaments running lengthwise along the microtubule wall with the beta-tubulin subunit facing the microtubule plus end conferring a structural polarity. Microtubules usually have 13 protofilaments but different protofilament numbers can be found in some organisms and specialized cells. Mg(2+) is required as a cofactor. Post-translationally, some glutamate residues at the C-terminus are polyglutamylated, resulting in polyglutamate chains on the gamma-carboxyl group. Polyglutamylation plays a key role in microtubule severing by spastin (SPAST). SPAST preferentially recognizes and acts on microtubules decorated with short polyglutamate tails: severing activity by SPAST increases as the number of glutamates per tubulin rises from one to eight, but decreases beyond this glutamylation threshold. Glutamylation is also involved in cilia motility. In terms of processing, some glutamate residues at the C-terminus are monoglycylated but not polyglycylated due to the absence of functional TTLL10 in human. Monoglycylation is mainly limited to tubulin incorporated into cilia and flagella axonemes, which is required for their stability and maintenance. Flagella glycylation controls sperm motility. Both polyglutamylation and monoglycylation can coexist on the same protein on adjacent residues, and lowering glycylation levels increases polyglutamylation, and reciprocally. Phosphorylated on Ser-172 by CDK1 during the cell cycle, from metaphase to telophase, but not in interphase. This phosphorylation inhibits tubulin incorporation into microtubules.

The protein resides in the cytoplasm. It localises to the cytoskeleton. In terms of biological role, tubulin is the major constituent of microtubules, a cylinder consisting of laterally associated linear protofilaments composed of alpha- and beta-tubulin heterodimers. Microtubules grow by the addition of GTP-tubulin dimers to the microtubule end, where a stabilizing cap forms. Below the cap, tubulin dimers are in GDP-bound state, owing to GTPase activity of alpha-tubulin. The sequence is that of Tubulin beta 8B from Homo sapiens (Human).